Here is a 55-residue protein sequence, read N- to C-terminus: MIVNNTHILTLPPHAVSTLTCILIWHRHTDATVYIISSYPTLTFHSMAHLSLHQY.

This is an uncharacterized protein from Saccharomyces cerevisiae (strain ATCC 204508 / S288c) (Baker's yeast).